Consider the following 160-residue polypeptide: Phosphopantetheine adenylyltransferase (160 aa).

Substrate is bound at residue Thr10. ATP contacts are provided by residues 10–11 and His18; that span reads TF. Residues Lys42, Met74, and Arg88 each contribute to the substrate site. ATP is bound by residues 89 to 91, Glu99, and 124 to 130; these read GLR and LSFLSSS.

The protein belongs to the bacterial CoaD family. Homohexamer. Mg(2+) serves as cofactor.

The protein resides in the cytoplasm. The enzyme catalyses (R)-4'-phosphopantetheine + ATP + H(+) = 3'-dephospho-CoA + diphosphate. It functions in the pathway cofactor biosynthesis; coenzyme A biosynthesis; CoA from (R)-pantothenate: step 4/5. Reversibly transfers an adenylyl group from ATP to 4'-phosphopantetheine, yielding dephospho-CoA (dPCoA) and pyrophosphate. The chain is Phosphopantetheine adenylyltransferase from Photorhabdus laumondii subsp. laumondii (strain DSM 15139 / CIP 105565 / TT01) (Photorhabdus luminescens subsp. laumondii).